We begin with the raw amino-acid sequence, 347 residues long: Heat-inducible transcription repressor HrcA (347 aa).

Belongs to the HrcA family.

In terms of biological role, negative regulator of class I heat shock genes (grpE-dnaK-dnaJ and groELS operons). Prevents heat-shock induction of these operons. This Sorangium cellulosum (strain So ce56) (Polyangium cellulosum (strain So ce56)) protein is Heat-inducible transcription repressor HrcA.